The primary structure comprises 329 residues: uncharacterized protein (329 aa).

An N-terminal signal peptide occupies residues 1–32 (MSQDRGPRRPRRLEKCALISASATVLSLTASG). The N-palmitoyl cysteine moiety is linked to residue Cys-33. Cys-33 carries S-diacylglycerol cysteine lipidation.

It localises to the cell membrane. This is an uncharacterized protein from Streptomyces coelicolor (strain ATCC BAA-471 / A3(2) / M145).